The sequence spans 366 residues: Aminomethyltransferase (366 aa).

It belongs to the GcvT family. The glycine cleavage system is composed of four proteins: P, T, L and H.

The enzyme catalyses N(6)-[(R)-S(8)-aminomethyldihydrolipoyl]-L-lysyl-[protein] + (6S)-5,6,7,8-tetrahydrofolate = N(6)-[(R)-dihydrolipoyl]-L-lysyl-[protein] + (6R)-5,10-methylene-5,6,7,8-tetrahydrofolate + NH4(+). Its function is as follows. The glycine cleavage system catalyzes the degradation of glycine. The chain is Aminomethyltransferase from Bordetella parapertussis (strain 12822 / ATCC BAA-587 / NCTC 13253).